The following is a 422-amino-acid chain: 4-hydroxy-3-methylbut-2-en-1-yl diphosphate synthase (flavodoxin) (422 aa).

Positions 316, 319, 362, and 369 each coordinate [4Fe-4S] cluster.

It belongs to the IspG family. [4Fe-4S] cluster serves as cofactor.

The catalysed reaction is (2E)-4-hydroxy-3-methylbut-2-enyl diphosphate + oxidized [flavodoxin] + H2O + 2 H(+) = 2-C-methyl-D-erythritol 2,4-cyclic diphosphate + reduced [flavodoxin]. It functions in the pathway isoprenoid biosynthesis; isopentenyl diphosphate biosynthesis via DXP pathway; isopentenyl diphosphate from 1-deoxy-D-xylulose 5-phosphate: step 5/6. Its function is as follows. Converts 2C-methyl-D-erythritol 2,4-cyclodiphosphate (ME-2,4cPP) into 1-hydroxy-2-methyl-2-(E)-butenyl 4-diphosphate. The sequence is that of 4-hydroxy-3-methylbut-2-en-1-yl diphosphate synthase (flavodoxin) from Ehrlichia canis (strain Jake).